The sequence spans 427 residues: Glutamyl-tRNA reductase (427 aa).

Substrate contacts are provided by residues 48–51 (TCNR), Ser99, 104–106 (EDQ), and Gln110. Cys49 acts as the Nucleophile in catalysis. 179 to 184 (GAGEMG) contacts NADP(+).

It belongs to the glutamyl-tRNA reductase family. In terms of assembly, homodimer.

The catalysed reaction is (S)-4-amino-5-oxopentanoate + tRNA(Glu) + NADP(+) = L-glutamyl-tRNA(Glu) + NADPH + H(+). It participates in porphyrin-containing compound metabolism; protoporphyrin-IX biosynthesis; 5-aminolevulinate from L-glutamyl-tRNA(Glu): step 1/2. Its function is as follows. Catalyzes the NADPH-dependent reduction of glutamyl-tRNA(Glu) to glutamate 1-semialdehyde (GSA). This is Glutamyl-tRNA reductase from Methanocella arvoryzae (strain DSM 22066 / NBRC 105507 / MRE50).